The chain runs to 210 residues: Protein GrpE (210 aa).

The protein belongs to the GrpE family. Homodimer.

Its subcellular location is the cytoplasm. Participates actively in the response to hyperosmotic and heat shock by preventing the aggregation of stress-denatured proteins, in association with DnaK and GrpE. It is the nucleotide exchange factor for DnaK and may function as a thermosensor. Unfolded proteins bind initially to DnaJ; upon interaction with the DnaJ-bound protein, DnaK hydrolyzes its bound ATP, resulting in the formation of a stable complex. GrpE releases ADP from DnaK; ATP binding to DnaK triggers the release of the substrate protein, thus completing the reaction cycle. Several rounds of ATP-dependent interactions between DnaJ, DnaK and GrpE are required for fully efficient folding. This is Protein GrpE from Rhizobium leguminosarum bv. trifolii (strain WSM2304).